The primary structure comprises 196 residues: ATP-dependent Clp protease proteolytic subunit (196 aa).

Ser101 (nucleophile) is an active-site residue. The active site involves His126.

Belongs to the peptidase S14 family. Component of the chloroplastic Clp protease core complex.

It is found in the plastid. Its subcellular location is the chloroplast stroma. It catalyses the reaction Hydrolysis of proteins to small peptides in the presence of ATP and magnesium. alpha-casein is the usual test substrate. In the absence of ATP, only oligopeptides shorter than five residues are hydrolyzed (such as succinyl-Leu-Tyr-|-NHMec, and Leu-Tyr-Leu-|-Tyr-Trp, in which cleavage of the -Tyr-|-Leu- and -Tyr-|-Trp bonds also occurs).. Functionally, cleaves peptides in various proteins in a process that requires ATP hydrolysis. Has a chymotrypsin-like activity. Plays a major role in the degradation of misfolded proteins. The protein is ATP-dependent Clp protease proteolytic subunit of Spinacia oleracea (Spinach).